The following is a 157-amino-acid chain: ATP synthase subunit delta (157 aa).

This sequence belongs to the ATPase delta chain family. As to quaternary structure, F-type ATPases have 2 components, F(1) - the catalytic core - and F(0) - the membrane proton channel. F(1) has five subunits: alpha(3), beta(3), gamma(1), delta(1), epsilon(1). F(0) has three main subunits: a(1), b(2) and c(10-14). The alpha and beta chains form an alternating ring which encloses part of the gamma chain. F(1) is attached to F(0) by a central stalk formed by the gamma and epsilon chains, while a peripheral stalk is formed by the delta and b chains.

It is found in the cell membrane. F(1)F(0) ATP synthase produces ATP from ADP in the presence of a proton or sodium gradient. F-type ATPases consist of two structural domains, F(1) containing the extramembraneous catalytic core and F(0) containing the membrane proton channel, linked together by a central stalk and a peripheral stalk. During catalysis, ATP synthesis in the catalytic domain of F(1) is coupled via a rotary mechanism of the central stalk subunits to proton translocation. Its function is as follows. This protein is part of the stalk that links CF(0) to CF(1). It either transmits conformational changes from CF(0) to CF(1) or is implicated in proton conduction. The polypeptide is ATP synthase subunit delta (Chloroflexus aurantiacus (strain ATCC 29364 / DSM 637 / Y-400-fl)).